Reading from the N-terminus, the 197-residue chain is Nucleoid occlusion factor SlmA (197 aa).

Positions isoleucine 7 to isoleucine 67 constitute an HTH tetR-type domain. The H-T-H motif DNA-binding region spans threonine 30–phenylalanine 49. The stretch at alanine 110–glutamate 130 forms a coiled coil.

This sequence belongs to the nucleoid occlusion factor SlmA family. Homodimer. Interacts with FtsZ.

The protein localises to the cytoplasm. Its subcellular location is the nucleoid. In terms of biological role, required for nucleoid occlusion (NO) phenomenon, which prevents Z-ring formation and cell division over the nucleoid. Acts as a DNA-associated cell division inhibitor that binds simultaneously chromosomal DNA and FtsZ, and disrupts the assembly of FtsZ polymers. SlmA-DNA-binding sequences (SBS) are dispersed on non-Ter regions of the chromosome, preventing FtsZ polymerization at these regions. This is Nucleoid occlusion factor SlmA from Shewanella frigidimarina (strain NCIMB 400).